A 70-amino-acid polypeptide reads, in one-letter code: Conotoxin Im23.3 (70 aa).

Residues Met1–Gly22 form the signal peptide. The propeptide occupies Asp23–Ala28. Cystine bridges form between Cys34–Cys41, Cys45–Cys53, and Cys54–Cys69.

This sequence belongs to the conotoxin K superfamily. Expressed by the venom duct.

The protein resides in the secreted. Its function is as follows. Neurotoxin that induces excitatory symptoms in mice following intracranial administration. No symptoms are observed after intraperitoneal and intravenous (tail vein) injections. This Conus imperialis (Imperial cone) protein is Conotoxin Im23.3.